Here is a 524-residue protein sequence, read N- to C-terminus: tRNA-2-methylthio-N(6)-dimethylallyladenosine synthase (524 aa).

A compositionally biased stretch (basic and acidic residues) spans 1 to 12 (MNTHPSHPDHPA). The interval 1–23 (MNTHPSHPDHPADTLPARGNREG) is disordered. The MTTase N-terminal domain maps to 27–143 (RTYEVRTFGC…LPTLLNRAEH (117 aa)). [4Fe-4S] cluster is bound by residues Cys-36, Cys-72, Cys-106, Cys-180, Cys-184, and Cys-187. The Radical SAM core domain maps to 166 to 402 (RESAYAGWVS…MALQERICEE (237 aa)). A TRAM domain is found at 405 to 476 (QKFIGQTVEL…PFFLIADAGV (72 aa)).

It belongs to the methylthiotransferase family. MiaB subfamily. As to quaternary structure, monomer. It depends on [4Fe-4S] cluster as a cofactor.

Its subcellular location is the cytoplasm. It carries out the reaction N(6)-dimethylallyladenosine(37) in tRNA + (sulfur carrier)-SH + AH2 + 2 S-adenosyl-L-methionine = 2-methylsulfanyl-N(6)-dimethylallyladenosine(37) in tRNA + (sulfur carrier)-H + 5'-deoxyadenosine + L-methionine + A + S-adenosyl-L-homocysteine + 2 H(+). Catalyzes the methylthiolation of N6-(dimethylallyl)adenosine (i(6)A), leading to the formation of 2-methylthio-N6-(dimethylallyl)adenosine (ms(2)i(6)A) at position 37 in tRNAs that read codons beginning with uridine. The polypeptide is tRNA-2-methylthio-N(6)-dimethylallyladenosine synthase (Corynebacterium efficiens (strain DSM 44549 / YS-314 / AJ 12310 / JCM 11189 / NBRC 100395)).